The sequence spans 1333 residues: Aldehyde oxidase 1 (1333 aa).

The region spanning 4-91 is the 2Fe-2S ferredoxin-type domain; the sequence is PQLLFYVNGQ…GTAVTTVEGI (88 aa). Residues Cys-43, Cys-48, Cys-51, and Cys-73 each coordinate [2Fe-2S] cluster. Gln-112 provides a ligand contact to Mo-molybdopterin. [2Fe-2S] cluster is bound by residues Cys-113, Cys-116, Cys-148, and Cys-150. Cys-150 lines the Mo-molybdopterin pocket. Residues 235–420 form the FAD-binding PCMH-type domain; that stretch reads FYSNRMTWIS…VSVNIPCSRK (186 aa). FAD contacts are provided by residues 263–270, Ala-344, Ser-353, His-357, Asp-366, and Leu-410; that span reads IVMGYTSV. Mo-molybdopterin-binding positions include 801-802 and Met-1042; that span reads AF. Ser-1063 carries the post-translational modification Phosphoserine. Mo-molybdopterin contacts are provided by residues 1083 to 1086, Gln-1198, and Leu-1263; that span reads GSVV. The active-site Proton acceptor; for azaheterocycle hydroxylase activity is Glu-1265.

The protein belongs to the xanthine dehydrogenase family. Homodimer. Requires [2Fe-2S] cluster as cofactor. It depends on FAD as a cofactor. The cofactor is Mo-molybdopterin. The N-terminus is blocked. Expression in liver (at protein level). Also detected in heart, lung, spleen and kidney.

The protein resides in the cytoplasm. It carries out the reaction an aldehyde + O2 + H2O = a carboxylate + H2O2 + H(+). The catalysed reaction is retinal + O2 + H2O = retinoate + H2O2 + H(+). With respect to regulation, inhibited by menadione and isovanillin. Not inhibited by allopurinol, a xanthine dehydrogenase potent inhibitor. Inhibited by the flavonoids quercetin, myricetin and genistein. Nitric oxide generation is inhibited by raloxifene and competitively inhibited by an increase in oxygen levels. Its function is as follows. Oxidase with broad substrate specificity, oxidizing aromatic azaheterocycles, such as N1-methylnicotinamide, N-methylphthalazinium and phthalazine, as well as aldehydes, such as benzaldehyde, retinal, pyridoxal, and vanillin. Plays a role in the metabolism of xenobiotics and drugs containing aromatic azaheterocyclic substituents. Participates in the bioactivation of prodrugs such as famciclovir, catalyzing the oxidation step from 6-deoxypenciclovir to penciclovir, which is a potent antiviral agent. Is probably involved in the regulation of reactive oxygen species homeostasis. Is a prominent source of superoxide generation via the one-electron reduction of molecular oxygen. Also catalyzes nitric oxide (NO) production; under anaerobic conditions, reduces nitrite to NO with NADH or aldehyde as electron donor, but under aerobic conditions, NADH is the preferred substrate. These reactions may be catalyzed by several isozymes. May play a role in adipogenesis. The sequence is that of Aldehyde oxidase 1 from Rattus norvegicus (Rat).